A 371-amino-acid chain; its full sequence is tRNA-specific 2-thiouridylase MnmA (371 aa).

Residues 13 to 20 and methionine 39 each bind ATP; that span reads GMSGGVDS. The tract at residues 99–101 is interaction with target base in tRNA; the sequence is NPD. Cysteine 104 functions as the Nucleophile in the catalytic mechanism. A disulfide bridge links cysteine 104 with cysteine 200. An ATP-binding site is contributed by glycine 128. The tract at residues 150–152 is interaction with tRNA; the sequence is KDQ. The active-site Cysteine persulfide intermediate is cysteine 200. An interaction with tRNA region spans residues 308–309; sequence RY.

It belongs to the MnmA/TRMU family.

It is found in the cytoplasm. It carries out the reaction S-sulfanyl-L-cysteinyl-[protein] + uridine(34) in tRNA + AH2 + ATP = 2-thiouridine(34) in tRNA + L-cysteinyl-[protein] + A + AMP + diphosphate + H(+). Functionally, catalyzes the 2-thiolation of uridine at the wobble position (U34) of tRNA, leading to the formation of s(2)U34. The protein is tRNA-specific 2-thiouridylase MnmA of Listeria monocytogenes serovar 1/2a (strain ATCC BAA-679 / EGD-e).